The primary structure comprises 125 residues: MIYGIGTDLVDPARIASSLERYGEQFARRVLADSEWPDYLEHIKPALFLAKRFAAKEAFSKATGTGLRAPVMFGNMAVQHDSQGKPYFEFQQELAEWIGQRGITRHHLSISDELTMVSAFVVLEK.

Residues Asp8 and Glu57 each contribute to the Mg(2+) site.

It belongs to the P-Pant transferase superfamily. AcpS family. It depends on Mg(2+) as a cofactor.

It is found in the cytoplasm. It carries out the reaction apo-[ACP] + CoA = holo-[ACP] + adenosine 3',5'-bisphosphate + H(+). In terms of biological role, transfers the 4'-phosphopantetheine moiety from coenzyme A to a Ser of acyl-carrier-protein. In Nitrosomonas europaea (strain ATCC 19718 / CIP 103999 / KCTC 2705 / NBRC 14298), this protein is Holo-[acyl-carrier-protein] synthase.